A 273-amino-acid polypeptide reads, in one-letter code: 2,3,4,5-tetrahydropyridine-2,6-dicarboxylate N-succinyltransferase (273 aa).

This sequence belongs to the transferase hexapeptide repeat family.

The protein localises to the cytoplasm. It carries out the reaction (S)-2,3,4,5-tetrahydrodipicolinate + succinyl-CoA + H2O = (S)-2-succinylamino-6-oxoheptanedioate + CoA. It functions in the pathway amino-acid biosynthesis; L-lysine biosynthesis via DAP pathway; LL-2,6-diaminopimelate from (S)-tetrahydrodipicolinate (succinylase route): step 1/3. This Acinetobacter baumannii (strain AB307-0294) protein is 2,3,4,5-tetrahydropyridine-2,6-dicarboxylate N-succinyltransferase.